We begin with the raw amino-acid sequence, 113 residues long: MNTGRVTFLVVFLVAVSLGPADKEENPMEMQEKTQQGKNYLNFGENLVVPKLEELKAKLVEKESKKSKNSRQKRCIGEGVACDENDPRCWSGLICPKPTLPGIWDKSYYCYKK.

An N-terminal signal peptide occupies residues 1–21 (MNTGRVTFLVVFLVAVSLGPA). A propeptide spanning residues 22-74 (DKEENPMEMQEKTQQGKNYLNFGENLVVPKLEELKAKLVEKESKKSKNSRQKR) is cleaved from the precursor. Intrachain disulfides connect cysteine 82/cysteine 95 and cysteine 89/cysteine 110.

The protein belongs to the neurotoxin 14 (magi-1) family. 01 (HNTX-16) subfamily. Expressed by the venom gland.

It is found in the secreted. Functionally, probable ion channel inhibitor. The protein is U11-theraphotoxin-Hhn1l of Cyriopagopus hainanus (Chinese bird spider).